We begin with the raw amino-acid sequence, 117 residues long: Large ribosomal subunit protein uL18 (117 aa).

It belongs to the universal ribosomal protein uL18 family. As to quaternary structure, part of the 50S ribosomal subunit; part of the 5S rRNA/L5/L18/L25 subcomplex. Contacts the 5S and 23S rRNAs.

Functionally, this is one of the proteins that bind and probably mediate the attachment of the 5S RNA into the large ribosomal subunit, where it forms part of the central protuberance. The protein is Large ribosomal subunit protein uL18 of Mycoplasma mobile (strain ATCC 43663 / 163K / NCTC 11711) (Mesomycoplasma mobile).